The chain runs to 1068 residues: Phosphatidylinositol 4,5-bisphosphate 3-kinase catalytic subunit alpha isoform (1068 aa).

Residues 16-105 (MPPRILVECL…QPFLKVIEPV (90 aa)) enclose the PI3K-ABD domain. The PI3K-RBD domain occupies 187–289 (KGQIIVVIWV…GRMPNLMLMA (103 aa)). In terms of domain architecture, C2 PI3K-type spans 330-487 (INSALRIKIL…DWFSSVVKFP (158 aa)). The region spanning 517-694 (LARDNELREN…GLLLESYCRA (178 aa)) is the PIK helical domain. The 287-residue stretch at 765 to 1051 (RLEECRIMSS…QMNDAHHGGW (287 aa)) folds into the PI3K/PI4K catalytic domain. Positions 771–777 (IMSSAKR) are G-loop. Residues 912–920 (GIGDRHNSN) form a catalytic loop region. The activation loop stretch occupies residues 931–957 (HIDFGHFLDHKKKKFGYKRERVPFVLT).

It belongs to the PI3/PI4-kinase family. As to quaternary structure, heterodimer of a catalytic subunit PIK3CA and a p85 regulatory subunit (PIK3R1, PIK3R2 or PIK3R3). Interacts with IRS1 in nuclear extracts. Interacts with RUFY3. Interacts with RASD2. Interacts with APPL1. Interacts with HRAS and KRAS. Interaction with HRAS/KRAS is required for PI3K pathway signaling and cell proliferation stimulated by EGF and FGF2. Interacts with FAM83B; activates the PI3K/AKT signaling cascade.

It catalyses the reaction a 1,2-diacyl-sn-glycero-3-phospho-(1D-myo-inositol-4,5-bisphosphate) + ATP = a 1,2-diacyl-sn-glycero-3-phospho-(1D-myo-inositol-3,4,5-trisphosphate) + ADP + H(+). The enzyme catalyses a 1,2-diacyl-sn-glycero-3-phospho-(1D-myo-inositol) + ATP = a 1,2-diacyl-sn-glycero-3-phospho-(1D-myo-inositol-3-phosphate) + ADP + H(+). The catalysed reaction is L-seryl-[protein] + ATP = O-phospho-L-seryl-[protein] + ADP + H(+). It carries out the reaction 1,2-dioctanoyl-sn-glycero-3-phospho-(1D-myo-inositol-4,5-bisphosphate) + ATP = 1,2-dioctanoyl-sn-glycero-3-phospho-(1D-myo-inositol-3,4,5-trisphosphate) + ADP + H(+). It catalyses the reaction 1-octadecanoyl-2-(5Z,8Z,11Z,14Z)-eicosatetraenoyl-sn-glycero-3-phospho-1D-myo-inositol 4,5-bisphosphate + ATP = 1-octadecanoyl-2-(5Z,8Z,11Z,14Z-eicosatetraenoyl)-sn-glycero-3-phospho-(1D-myo-inositol 3,4,5-triphosphate) + ADP + H(+). The protein operates within phospholipid metabolism; phosphatidylinositol phosphate biosynthesis. Phosphoinositide-3-kinase (PI3K) phosphorylates phosphatidylinositol (PI) and its phosphorylated derivatives at position 3 of the inositol ring to produce 3-phosphoinositides. Uses ATP and PtdIns(4,5)P2 (phosphatidylinositol 4,5-bisphosphate) to generate phosphatidylinositol 3,4,5-trisphosphate (PIP3). PIP3 plays a key role by recruiting PH domain-containing proteins to the membrane, including AKT1 and PDPK1, activating signaling cascades involved in cell growth, survival, proliferation, motility and morphology. Participates in cellular signaling in response to various growth factors. Involved in the activation of AKT1 upon stimulation by receptor tyrosine kinases ligands such as EGF, insulin, IGF1, VEGFA and PDGF. Involved in signaling via insulin-receptor substrate (IRS) proteins. Essential in endothelial cell migration during vascular development through VEGFA signaling, possibly by regulating RhoA activity. Required for lymphatic vasculature development, possibly by binding to RAS and by activation by EGF and FGF2, but not by PDGF. Regulates invadopodia formation through the PDPK1-AKT1 pathway. Participates in cardiomyogenesis in embryonic stem cells through a AKT1 pathway. Participates in vasculogenesis in embryonic stem cells through PDK1 and protein kinase C pathway. In addition to its lipid kinase activity, it displays a serine-protein kinase activity that results in the autophosphorylation of the p85alpha regulatory subunit as well as phosphorylation of other proteins such as 4EBP1, H-Ras, the IL-3 beta c receptor and possibly others. Plays a role in the positive regulation of phagocytosis and pinocytosis. The chain is Phosphatidylinositol 4,5-bisphosphate 3-kinase catalytic subunit alpha isoform (PIK3CA) from Homo sapiens (Human).